Here is a 231-residue protein sequence, read N- to C-terminus: Uridylate kinase (231 aa).

Position 6–9 (6–9) interacts with ATP; the sequence is KLSG. Positions 14–19 are involved in allosteric activation by GTP; that stretch reads GEGGRG. 2 residues coordinate ATP: G49 and R53. UMP is bound by residues D66 and 127-134; that span reads TSNPFFTT. Positions 154, 160, and 163 each coordinate ATP.

Belongs to the UMP kinase family. In terms of assembly, homohexamer.

The protein localises to the cytoplasm. It carries out the reaction UMP + ATP = UDP + ADP. The protein operates within pyrimidine metabolism; CTP biosynthesis via de novo pathway; UDP from UMP (UMPK route): step 1/1. Allosterically activated by GTP. Inhibited by UTP. Functionally, catalyzes the reversible phosphorylation of UMP to UDP. This Thermotoga petrophila (strain ATCC BAA-488 / DSM 13995 / JCM 10881 / RKU-1) protein is Uridylate kinase.